Consider the following 252-residue polypeptide: 5'-nucleotidase SurE (252 aa).

Residues aspartate 8, aspartate 9, serine 40, and asparagine 92 each contribute to the a divalent metal cation site.

Belongs to the SurE nucleotidase family. A divalent metal cation is required as a cofactor.

The protein localises to the cytoplasm. The enzyme catalyses a ribonucleoside 5'-phosphate + H2O = a ribonucleoside + phosphate. Its function is as follows. Nucleotidase that shows phosphatase activity on nucleoside 5'-monophosphates. The protein is 5'-nucleotidase SurE of Chelativorans sp. (strain BNC1).